Reading from the N-terminus, the 25-residue chain is GLLDIVTGLLGNLIVDVLKPKTPAS.

Belongs to the frog skin active peptide (FSAP) family. Aurein subfamily. As to expression, expressed by the skin dorsal glands.

The protein localises to the secreted. In terms of biological role, has no antimicrobial or anticancer activity. This is Aurein-5.1 from Ranoidea aurea (Green and golden bell frog).